Reading from the N-terminus, the 433-residue chain is uncharacterized protein (433 aa).

One can recognise an HD domain in the interval 61-178; that stretch reads RFNHSLGVYE…QIDADRMDYL (118 aa).

This is an uncharacterized protein from Bacillus subtilis (strain 168).